The chain runs to 380 residues: Phthiodiolone/phenolphthiodiolone dimycocerosates ketoreductase (380 aa).

It belongs to the mer family. Phthiodiolone/phenolphthiodiolone dimycocerosates ketoreductase subfamily.

Its function is as follows. Catalyzes the reduction of the keto moiety of phthiodiolone dimycocerosates (DIM B) and glycosylated phenolphthiodiolone dimycocerosates to form the intermediate compounds phthiotriol and glycosylated phenolphthiotriol dimycocerosates during phthiocerol dimycocerosates (DIM A) and glycosylated phenolphthiocerol dimycocerosates (PGL) biosynthesis. The sequence is that of Phthiodiolone/phenolphthiodiolone dimycocerosates ketoreductase from Mycobacterium sp. (strain JLS).